We begin with the raw amino-acid sequence, 447 residues long: GTPase Der (447 aa).

EngA-type G domains follow at residues 4-165 (KIIT…SIKE) and 180-357 (LQIV…KIWN). Residues 10–17 (GRPNVGKS), 57–61 (DTPGL), 119–122 (NKCE), 186–193 (GRPNAGKS), 233–237 (DTAGL), and 298–301 (NKWD) each bind GTP. One can recognise a KH-like domain in the interval 358-443 (KKITTGKLNE…PIRFTYVKNK (86 aa)).

This sequence belongs to the TRAFAC class TrmE-Era-EngA-EngB-Septin-like GTPase superfamily. EngA (Der) GTPase family. In terms of assembly, associates with the 50S ribosomal subunit.

Its function is as follows. GTPase that plays an essential role in the late steps of ribosome biogenesis. The sequence is that of GTPase Der from Rickettsia typhi (strain ATCC VR-144 / Wilmington).